Here is a 790-residue protein sequence, read N- to C-terminus: Tumor necrosis factor alpha-induced protein 3 (790 aa).

Alanine 2 is modified (N-acetylalanine). Positions 58-300 (PQFREIIHKA…LTDPENEMKE (243 aa)) are TRAF-binding. Residues 92 to 263 (LVALKTNGDG…SHHFVPLVTL (172 aa)) enclose the OTU domain. Aspartate 100 is an active-site residue. The active-site Nucleophile is cysteine 103. Interaction with ubiquitin regions lie at residues 157–159 (LCY), 190–192 (SLE), and 224–227 (FAPL). Histidine 256 (proton acceptor) is an active-site residue. Basic and acidic residues predominate over residues 357–368 (QENSEQGRREGH). Residues 357-377 (QENSEQGRREGHAQNPMEPSV) form a disordered region. Positions 369–775 (AQNPMEPSVP…ACDHFGNAKC (407 aa)) are interaction with TNIP1. Residues 381–416 (SLMDVKCETPNCPFFMSVNTQPLCHECSERRQKNQN) form an A20-type 1 zinc finger. The interaction with RIPK1 stretch occupies residues 386–453 (KCETPNCPFF…EPLAWNPEES (68 aa)). Positions 387, 392, 404, and 407 each coordinate Zn(2+). 2 disordered regions span residues 415-434 (QNKLPKLNSKPGPEGLPGMA) and 447-468 (AWNPEESTGGPHSAPPTAPSPF). Serine 459 carries the phosphoserine modification. 2 A20-type zinc fingers span residues 472–507 (ETTAMKCRSPGCPFTLNVQHNGFCERCHNARQLHAS) and 515–548 (HLDPGKCQACLQDVTRTFNGICSTCFKRTTAEAS). Residues cysteine 478, cysteine 483, cysteine 495, cysteine 498, cysteine 521, cysteine 524, cysteine 536, and cysteine 539 each contribute to the Zn(2+) site. The segment at 550–583 (SLSTSLPPSCHQRSKSDPSRLVRSPSPHSCHRAG) is disordered. Serine 575 is subject to Phosphoserine. The segment at 601 to 636 (RTGTSKCRKAGCVYFGTPENKGFCTLCFIEYRENKH) adopts an A20-type 4 zinc-finger fold. Residues 605-655 (SKCRKAGCVYFGTPENKGFCTLCFIEYRENKHFAAASGKVSPTASRFQNTI) form a required for proteasomal degradation of UBE2N and UBE2D3, TRAF6 deubiquitination, and TAX1BP1 interaction with UBE2N region. The tract at residues 606-790 (KCRKAGCVYF…ECFQFKQMYG (185 aa)) is sufficient for inhibitory activity of TNF-induced NF-kappa-B activity. Residues cysteine 607, cysteine 612, cysteine 624, and cysteine 627 each coordinate Zn(2+). A Phosphoserine modification is found at serine 645. The A20-type 5 zinc finger occupies 651–686 (FQNTIPCLGRECGTLGSTMFEGYCQKCFIEAQNQRF). The Zn(2+) site is built by cysteine 657, cysteine 662, cysteine 674, and cysteine 677. The segment covering 689–705 (AKRTEEQLRSSQRRDVP) has biased composition (basic and acidic residues). Positions 689–712 (AKRTEEQLRSSQRRDVPRTTQSTS) are disordered. A required for lysosomal localization and for TRAF2 lysosomal degradation region spans residues 697-790 (RSSQRRDVPR…ECFQFKQMYG (94 aa)). 2 consecutive A20-type zinc fingers follow at residues 710–745 (STSRPKCARASCKNILACRSEELCMECQHPNQRMGP) and 756–790 (DPPKQRCRAPACDHFGNAKCNGYCNECFQFKQMYG). 8 residues coordinate Zn(2+): cysteine 716, cysteine 721, cysteine 733, cysteine 736, cysteine 762, cysteine 767, cysteine 779, and cysteine 782.

The protein belongs to the peptidase C64 family. In terms of assembly, homodimer. Interacts with TNIP1, TAX1BP1 and TRAF2. Interacts with RNF11, ITCH and TAX1BP1 only after TNF stimulation; these interaction are transient and they are lost after 1 hour of stimulation with TNF. Interacts with YWHAZ and YWHAH. Interacts with IKBKG; the interaction is induced by TNF stimulation and by polyubiquitin. Interacts with RIPK1. Interacts with UBE2N; the interaction requires TAX1BP1. Interacts with TRAF6; the interaction is inhibited by HTLV-1 protein Tax. Proteolytically cleaved by MALT1 upon TCR stimulation; disrupts NF-kappa-B inhibitory function and results in increased IL-2 production. It is proposed that only a fraction of TNFAIP3 colocalized with TCR and CBM complex is cleaved, leaving the main TNFAIP3 pool intact.

It localises to the cytoplasm. It is found in the nucleus. The protein resides in the lysosome. It carries out the reaction Thiol-dependent hydrolysis of ester, thioester, amide, peptide and isopeptide bonds formed by the C-terminal Gly of ubiquitin (a 76-residue protein attached to proteins as an intracellular targeting signal).. Functionally, ubiquitin-editing enzyme that contains both ubiquitin ligase and deubiquitinase activities. Involved in immune and inflammatory responses signaled by cytokines, such as TNF-alpha and IL-1 beta, or pathogens via Toll-like receptors (TLRs) through terminating NF-kappa-B activity. Essential component of a ubiquitin-editing protein complex, comprising also RNF11, ITCH and TAX1BP1, that ensures the transient nature of inflammatory signaling pathways. In cooperation with TAX1BP1 promotes disassembly of E2-E3 ubiquitin protein ligase complexes in IL-1R and TNFR-1 pathways; affected are at least E3 ligases TRAF6, TRAF2 and BIRC2, and E2 ubiquitin-conjugating enzymes UBE2N and UBE2D3. In cooperation with TAX1BP1 promotes ubiquitination of UBE2N and proteasomal degradation of UBE2N and UBE2D3. Upon TNF stimulation, deubiquitinates 'Lys-63'-polyubiquitin chains on RIPK1 and catalyzes the formation of 'Lys-48'-polyubiquitin chains. This leads to RIPK1 proteasomal degradation and consequently termination of the TNF- or LPS-mediated activation of NF-kappa-B. Deubiquitinates TRAF6 probably acting on 'Lys-63'-linked polyubiquitin. Upon T-cell receptor (TCR)-mediated T-cell activation, deubiquitinates 'Lys-63'-polyubiquitin chains on MALT1 thereby mediating disassociation of the CBM (CARD11:BCL10:MALT1) and IKK complexes and preventing sustained IKK activation. Deubiquitinates NEMO/IKBKG; the function is facilitated by TNIP1 and leads to inhibition of NF-kappa-B activation. Upon stimulation by bacterial peptidoglycans, probably deubiquitinates RIPK2. Can also inhibit I-kappa-B-kinase (IKK) through a non-catalytic mechanism which involves polyubiquitin; polyubiquitin promotes association with IKBKG and prevents IKK MAP3K7-mediated phosphorylation. Targets TRAF2 for lysosomal degradation. In vitro able to deubiquitinate 'Lys-11'-, 'Lys-48'- and 'Lys-63' polyubiquitin chains. Inhibitor of programmed cell death. Has a role in the function of the lymphoid system. Required for LPS-induced production of pro-inflammatory cytokines and IFN beta in LPS-tolerized macrophages. The sequence is that of Tumor necrosis factor alpha-induced protein 3 (TNFAIP3) from Homo sapiens (Human).